The primary structure comprises 304 residues: UDP-3-O-acyl-N-acetylglucosamine deacetylase (304 aa).

H78, H237, and D241 together coordinate Zn(2+). H264 functions as the Proton donor in the catalytic mechanism.

Belongs to the LpxC family. It depends on Zn(2+) as a cofactor.

The catalysed reaction is a UDP-3-O-[(3R)-3-hydroxyacyl]-N-acetyl-alpha-D-glucosamine + H2O = a UDP-3-O-[(3R)-3-hydroxyacyl]-alpha-D-glucosamine + acetate. The protein operates within glycolipid biosynthesis; lipid IV(A) biosynthesis; lipid IV(A) from (3R)-3-hydroxytetradecanoyl-[acyl-carrier-protein] and UDP-N-acetyl-alpha-D-glucosamine: step 2/6. In terms of biological role, catalyzes the hydrolysis of UDP-3-O-myristoyl-N-acetylglucosamine to form UDP-3-O-myristoylglucosamine and acetate, the committed step in lipid A biosynthesis. The chain is UDP-3-O-acyl-N-acetylglucosamine deacetylase from Acidithiobacillus ferrooxidans (strain ATCC 53993 / BNL-5-31) (Leptospirillum ferrooxidans (ATCC 53993)).